A 1185-amino-acid chain; its full sequence is Liprin-alpha-4 (1185 aa).

Coiled-coil stretches lie at residues 24–123 and 165–499; these read ANFE…CLVS and DEKV…GRGG. Disordered regions lie at residues 638–709 and 721–757; these read SASP…RTLR and EEGKSALEDQGSNPSSSNSSQDSLHKGAKRKGIKSSI. At Ser-640 the chain carries Phosphoserine. A compositionally biased stretch (polar residues) spans 645–656; it reads GRSTPKLTSRSA. The residue at position 681 (Ser-681) is a Phosphoserine. The span at 684-695 shows a compositional bias: basic and acidic residues; sequence SREENREDKATI. Positions 729 to 742 are enriched in low complexity; it reads DQGSNPSSSNSSQD. SAM domains follow at residues 829–895, 944–1008, and 1032–1101; these read WDGP…MVSL, NHEW…LKRL, and WTND…LLAL.

This sequence belongs to the liprin family. Liprin-alpha subfamily. Forms homodimers and heterodimers with liprins-alpha and liprins-beta. Interacts with the second PTPase domain of PTPRD, PTPRF and PTPRS. Interacts with RIMS1 and RIMS2. Interacts with GIT1 and GIT2. Interacts with GRIP1. Interacts with KIF1A. As to expression, expressed only in the heart, brain, and skeletal muscle.

It localises to the cytoplasm. The protein resides in the cell surface. Functionally, may regulate the disassembly of focal adhesions. May localize receptor-like tyrosine phosphatases type 2A at specific sites on the plasma membrane, possibly regulating their interaction with the extracellular environment and their association with substrates. The chain is Liprin-alpha-4 (PPFIA4) from Homo sapiens (Human).